The following is a 501-amino-acid chain: DEAD-box ATP-dependent RNA helicase 36 (501 aa).

Residues 1-68 (MEVDGEARPF…AAAVTEHAGD (68 aa)) form a disordered region. Residues 36-46 (EEPPNPSPSPA) show a composition bias toward pro residues. Residues 59-68 (AAAVTEHAGD) are compositionally biased toward low complexity. The short motif at 77–105 (STFAELGLSQWLVDVCDSLGMRVPTAVQR) is the Q motif element. Residues 108-281 (IPRALEGRDV…ELSGNNSYFF (174 aa)) form the Helicase ATP-binding domain. Position 121-128 (121-128 (AETGSGKT)) interacts with ATP. A DEAD box motif is present at residues 229–232 (DEAD). In terms of domain architecture, Helicase C-terminal spans 292-456 (TLKQLYIHVP…AYDGEMRDVN (165 aa)). Basic and acidic residues predominate over residues 473–486 (MADEGHEDKVQARK). A disordered region spans residues 473-501 (MADEGHEDKVQARKEQKKRAQERKRKHDE). A coiled-coil region spans residues 475–501 (DEGHEDKVQARKEQKKRAQERKRKHDE). The span at 487 to 501 (EQKKRAQERKRKHDE) shows a compositional bias: basic residues.

Belongs to the DEAD box helicase family. DDX49/DBP8 subfamily.

It catalyses the reaction ATP + H2O = ADP + phosphate + H(+). The protein is DEAD-box ATP-dependent RNA helicase 36 of Oryza sativa subsp. japonica (Rice).